A 464-amino-acid chain; its full sequence is Putative guanine nucleotide-binding protein subunit alpha (464 aa).

One can recognise a G-alpha domain in the interval 33–415 (HSKLKRGDGP…ETKRDKYNEK (383 aa)). A G1 motif region spans residues 36–49 (LKRGDGPGESGKST). Residues 41-48 (GPGESGKS), 147-151 (DVGGQ), 214-220 (LRSRTKT), 239-243 (DVGGQ), 268-271 (RNRD), and 310-313 (TSQS) each bind GTP. Position 48 (S48) interacts with Mg(2+). Residues 212–220 (DVLRSRTKT) form a G2 motif region. Position 220 (T220) interacts with Mg(2+). The G3 motif stretch occupies residues 235–244 (FRMVDVGGQR). The interval 306-313 (VMFLTSQS) is G4 motif. Positions 382–387 (GYSGTC) are G5 motif.

This sequence in the N-terminal section; belongs to the G-alpha family. The protein in the C-terminal section; belongs to the class-II aminoacyl-tRNA synthetase family. As to quaternary structure, g proteins are composed of 3 units; alpha, beta and gamma. The alpha chain contains the guanine nucleotide binding site.

Functionally, guanine nucleotide-binding proteins (G proteins) are involved as modulators or transducers in various transmembrane signaling systems. The polypeptide is Putative guanine nucleotide-binding protein subunit alpha (Leishmania donovani).